The following is a 477-amino-acid chain: Ribulose bisphosphate carboxylase large chain (477 aa).

The propeptide occupies 1 to 2; that stretch reads MS. P3 carries the N-acetylproline modification. N6,N6,N6-trimethyllysine is present on K14. 2 residues coordinate substrate: N123 and T173. K175 acts as the Proton acceptor in catalysis. K177 lines the substrate pocket. Mg(2+) is bound by residues K201, D203, and E204. Position 201 is an N6-carboxylysine (K201). The active-site Proton acceptor is the H294. Positions 295, 327, and 379 each coordinate substrate.

Belongs to the RuBisCO large chain family. Type I subfamily. In terms of assembly, heterohexadecamer of 8 large chains and 8 small chains; disulfide-linked. The disulfide link is formed within the large subunit homodimers. It depends on Mg(2+) as a cofactor. Post-translationally, the disulfide bond which can form in the large chain dimeric partners within the hexadecamer appears to be associated with oxidative stress and protein turnover.

Its subcellular location is the plastid. The protein localises to the chloroplast. The enzyme catalyses 2 (2R)-3-phosphoglycerate + 2 H(+) = D-ribulose 1,5-bisphosphate + CO2 + H2O. The catalysed reaction is D-ribulose 1,5-bisphosphate + O2 = 2-phosphoglycolate + (2R)-3-phosphoglycerate + 2 H(+). RuBisCO catalyzes two reactions: the carboxylation of D-ribulose 1,5-bisphosphate, the primary event in carbon dioxide fixation, as well as the oxidative fragmentation of the pentose substrate in the photorespiration process. Both reactions occur simultaneously and in competition at the same active site. This is Ribulose bisphosphate carboxylase large chain from Digitalis purpurea (Common foxglove).